Consider the following 58-residue polypeptide: ATP synthase F(0) complex subunit k, mitochondrial (58 aa).

Residues K16 and K17 each carry the N6-acetyllysine; partial modification. Residues 23-45 (TLTGRMNCVLATYGSIALIVLYF) traverse the membrane as a helical segment.

In terms of assembly, component of the ATP synthase complex composed at least of ATP5F1A/subunit alpha, ATP5F1B/subunit beta, ATP5MC1/subunit c (homooctomer), MT-ATP6/subunit a, MT-ATP8/subunit 8, ATP5ME/subunit e, ATP5MF/subunit f, ATP5MG/subunit g, ATP5MK/subunit k, ATP5MJ/subunit j, ATP5F1C/subunit gamma, ATP5F1D/subunit delta, ATP5F1E/subunit epsilon, ATP5PF/subunit F6, ATP5PB/subunit b, ATP5PD/subunit d, ATP5PO/subunit OSCP. ATP synthase complex consists of a soluble F(1) head domain (subunits alpha(3) and beta(3)) - the catalytic core - and a membrane F(0) domain - the membrane proton channel (subunits c, a, 8, e, f, g, k and j). These two domains are linked by a central stalk (subunits gamma, delta, and epsilon) rotating inside the F1 region and a stationary peripheral stalk (subunits F6, b, d, and OSCP). The ATP synthase complex/complex V exists as a monomeric and a dimeric supercomplex that helps shape mitochondrial cristae to optimize proton flow.

The protein resides in the mitochondrion membrane. In terms of biological role, subunit k, of the mitochondrial membrane ATP synthase complex (F(1)F(0) ATP synthase or Complex V) that produces ATP from ADP in the presence of a proton gradient across the membrane which is generated by electron transport complexes of the respiratory chain. ATP synthase complex consist of a soluble F(1) head domain - the catalytic core - and a membrane F(1) domain - the membrane proton channel. These two domains are linked by a central stalk rotating inside the F(1) region and a stationary peripheral stalk. During catalysis, ATP synthesis in the catalytic domain of F(1) is coupled via a rotary mechanism of the central stalk subunits to proton translocation. In vivo, can only synthesize ATP although its ATP hydrolase activity can be activated artificially in vitro. Part of the complex F(0) domain. Required for dimerization of the ATP synthase complex and as such regulates ATP synthesis in the mitochondria. This Bos taurus (Bovine) protein is ATP synthase F(0) complex subunit k, mitochondrial.